The chain runs to 54 residues: MDRKKDEIQRKYREQMREKKEREKEDGSSHTFEIVVVLAIIILMFFFNSVFKAF.

Over residues 1–28 (MDRKKDEIQRKYREQMREKKEREKEDGS) the composition is skewed to basic and acidic residues. Residues 1–29 (MDRKKDEIQRKYREQMREKKEREKEDGSS) form a disordered region. A helical transmembrane segment spans residues 31 to 51 (TFEIVVVLAIIILMFFFNSVF).

It is found in the cell membrane. This is an uncharacterized protein from Bacillus subtilis (strain 168).